Consider the following 229-residue polypeptide: Ribonuclease 3 (229 aa).

Positions Leu8–Asp130 constitute an RNase III domain. Glu43 contacts Mg(2+). The active site involves Asp47. Mg(2+) contacts are provided by Asp116 and Glu119. The active site involves Glu119. Residues Asp157–Glu227 form the DRBM domain. The interval Ser201–Ala229 is disordered.

The protein belongs to the ribonuclease III family. As to quaternary structure, homodimer. Requires Mg(2+) as cofactor.

Its subcellular location is the cytoplasm. It catalyses the reaction Endonucleolytic cleavage to 5'-phosphomonoester.. Functionally, digests double-stranded RNA. Involved in the processing of primary rRNA transcript to yield the immediate precursors to the large and small rRNAs (23S and 16S). Processes some mRNAs, and tRNAs when they are encoded in the rRNA operon. Processes pre-crRNA and tracrRNA of type II CRISPR loci if present in the organism. In Idiomarina loihiensis (strain ATCC BAA-735 / DSM 15497 / L2-TR), this protein is Ribonuclease 3.